The chain runs to 713 residues: Undecaprenyl-diphosphooligosaccharide--protein glycotransferase (713 aa).

Residues 1-11 are Cytoplasmic-facing; sequence MLKKEYLKNPY. Residues 12–35 form a helical membrane-spanning segment; the sequence is LVLFAMIILAYVFSVLCRFYWIWW. Residues 36-96 are Periplasmic-facing; that stretch reads ASEFNEYFFN…YWLYKITPFS (61 aa). The short motif at 52–54 is the DXD motif 1 element; sequence SND. A Mn(2+)-binding site is contributed by Asp-54. A helical membrane pass occupies residues 97-122; the sequence is FESIILYMSTFLSSLVVIPIILLANE. The Cytoplasmic segment spans residues 123 to 125; the sequence is YKR. A helical transmembrane segment spans residues 126–144; sequence PLMGFVAALLASVANSYYN. At 145–152 the chain is on the periplasmic side; that stretch reads RTMSGYYD. Asp-152 serves as a coordination point for Mn(2+). Positions 152-154 match the DXD motif 2 motif; that stretch reads DTD. The helical transmembrane segment at 153-174 threads the bilayer; the sequence is TDMLVIVLPMFILFFMVRMILK. Residues 175-176 are Cytoplasmic-facing; that stretch reads KD. Residues 177 to 192 traverse the membrane as a helical segment; sequence FFSLIALPLFIGIYLW. Residues 193-197 lie on the Periplasmic side of the membrane; sequence WYPSS. Residue 194 to 196 coordinates [alpha-D-GalNAc-(1-&gt;4)]2-[beta-D-Glc-(1-&gt;3)]-[alpha-D-GalNAc-(1-&gt;4)]2-alpha-D-GalNAc-(1-&gt;3)-alpha-D-diNAcBac-tri-trans,hepta-cis-undecaprenyl diphosphate; the sequence is YPS. The chain crosses the membrane as a helical span at residues 198–215; sequence YTLNVALIGLFLIYTLIF. The Cytoplasmic segment spans residues 216 to 220; sequence HRKEK. Residues 221 to 233 traverse the membrane as a helical segment; it reads IFYIAVILSSLTL. The Periplasmic segment spans residues 234 to 237; sequence SNIA. The helical transmembrane segment at 238–254 threads the bilayer; the sequence is WFYQSAIIVILFALFAL. The Cytoplasmic segment spans residues 255–260; the sequence is EQKRLN. A helical transmembrane segment spans residues 261-278; that stretch reads FMIIGILGSATLIFLILS. Residues 279 to 324 are Periplasmic-facing; it reads GGVDPILYQLKFYIFRNDESANLTQGFMYFNVNQTIQEVENVDFSE. Residue Tyr-291 participates in [alpha-D-GalNAc-(1-&gt;4)]2-[beta-D-Glc-(1-&gt;3)]-[alpha-D-GalNAc-(1-&gt;4)]2-alpha-D-GalNAc-(1-&gt;3)-alpha-D-diNAcBac-tri-trans,hepta-cis-undecaprenyl diphosphate binding. The TIXE motif motif lies at 313-316; it reads TIQE. Position 316 (Glu-316) interacts with Mn(2+). A helical transmembrane segment spans residues 325–347; sequence FMRRISGSEIVFLFSLFGFVWLL. The Cytoplasmic segment spans residues 348–352; that stretch reads RKHKS. Residues 353–369 form a helical membrane-spanning segment; the sequence is MIMALPILVLGFLALKG. The Periplasmic segment spans residues 370 to 373; the sequence is GLRF. Arg-372 is a [alpha-D-GalNAc-(1-&gt;4)]2-[beta-D-Glc-(1-&gt;3)]-[alpha-D-GalNAc-(1-&gt;4)]2-alpha-D-GalNAc-(1-&gt;3)-alpha-D-diNAcBac-tri-trans,hepta-cis-undecaprenyl diphosphate binding site. A helical membrane pass occupies residues 374–396; that stretch reads TIYSVPVMALGFGFLLSEFKAIL. Topologically, residues 397–406 are cytoplasmic; the sequence is VKKYSQLTSN. The chain crosses the membrane as a helical span at residues 407–427; the sequence is VCIVFATILTLAPVFIHIYNY. At 428-713 the chain is on the periplasmic side; that stretch reads KAPTVFSQNE…RDAKVFKLKI (286 aa). The tract at residues 457-459 is interacts with target acceptor peptide in protein substrate; that stretch reads WWD. A WWDYG motif motif is present at residues 457–461; sequence WWDYG. Residue Tyr-462 coordinates [alpha-D-GalNAc-(1-&gt;4)]2-[beta-D-Glc-(1-&gt;3)]-[alpha-D-GalNAc-(1-&gt;4)]2-alpha-D-GalNAc-(1-&gt;3)-alpha-D-diNAcBac-tri-trans,hepta-cis-undecaprenyl diphosphate. N-linked (DATDGlc) asparagine glycosylation occurs at Asn-534. Positions 568 to 575 match the MI motif motif; that stretch reads MSLIFSTV.

Belongs to the STT3 family. Mg(2+) serves as cofactor. Requires Mn(2+) as cofactor.

The protein localises to the cell inner membrane. It carries out the reaction tritrans,heptacis-undecaprenyl diphosphooligosaccharide + [protein]-L-asparagine = tritrans,heptacis-undecaprenyl diphosphate + a glycoprotein with the oligosaccharide chain attached by N-beta-D-glycosyl linkage to protein L-asparagine.. The protein operates within protein modification; protein glycosylation. Oligosaccharyltransferase that catalyzes the transfer of a preassembled heptasaccharide from a lipid donor to an asparagine residue in nascent polypeptide chains, affording a beta-linked glycan to the asparagine side chain of target proteins. Its function is as follows. Oligosaccharyl transferase (OST) that catalyzes the initial transfer of a defined glycan (GalNAc(2)GlcGalNAc(3)Bac(NAc)(2) in eubacteria, where Bac(NAc)(2) is di-N-acetyl bacillosamine) from the lipid carrier undecaprenol-pyrophosphate to an asparagine residue within an Asp/Glu-Asn-X-Ser/Thr consensus motif in nascent polypeptide chains, the first step in protein N-glycosylation. The polypeptide is Undecaprenyl-diphosphooligosaccharide--protein glycotransferase (pglB) (Campylobacter jejuni (strain RM1221)).